A 64-amino-acid polypeptide reads, in one-letter code: Large ribosomal subunit protein uL29 (64 aa).

It belongs to the universal ribosomal protein uL29 family.

The protein is Large ribosomal subunit protein uL29 of Burkholderia mallei (strain NCTC 10247).